Consider the following 686-residue polypeptide: Methionine--tRNA ligase (686 aa).

A 'HIGH' region motif is present at residues 13-23 (PYANGQIHIGH). Residues cysteine 144, cysteine 147, cysteine 157, and cysteine 160 each coordinate Zn(2+). The short motif at 335 to 339 (KMSKS) is the 'KMSKS' region element. Lysine 338 contributes to the ATP binding site. One can recognise a tRNA-binding domain in the interval 580 to 686 (DFAKVDLRVA…EGAVPGMRIG (107 aa)).

It belongs to the class-I aminoacyl-tRNA synthetase family. MetG type 1 subfamily. As to quaternary structure, homodimer. Requires Zn(2+) as cofactor.

The protein localises to the cytoplasm. It catalyses the reaction tRNA(Met) + L-methionine + ATP = L-methionyl-tRNA(Met) + AMP + diphosphate. Its function is as follows. Is required not only for elongation of protein synthesis but also for the initiation of all mRNA translation through initiator tRNA(fMet) aminoacylation. In Cupriavidus necator (strain ATCC 17699 / DSM 428 / KCTC 22496 / NCIMB 10442 / H16 / Stanier 337) (Ralstonia eutropha), this protein is Methionine--tRNA ligase.